Consider the following 310-residue polypeptide: uncharacterized protein (310 aa).

This is an uncharacterized protein from Archaeoglobus fulgidus (strain ATCC 49558 / DSM 4304 / JCM 9628 / NBRC 100126 / VC-16).